The following is a 177-amino-acid chain: Putative rubredoxin (177 aa).

In terms of domain architecture, Rubredoxin-like spans 1 to 38 (MKICRICGYQIPEGEFNLLEDGWVCPRCGVGKEELQDS). The Fe cation site is built by Cys4, Cys7, Cys25, and Cys28.

This sequence belongs to the rubredoxin family. Fe(3+) serves as cofactor.

This chain is Putative rubredoxin (rdxA), found in Methanothermobacter thermautotrophicus (strain ATCC 29096 / DSM 1053 / JCM 10044 / NBRC 100330 / Delta H) (Methanobacterium thermoautotrophicum).